Here is a 930-residue protein sequence, read N- to C-terminus: APC membrane recruitment protein 1 (930 aa).

Disordered regions lie at residues 1 to 33 (MEIATRCEVGAMRGPSSDSVSHDIPQPQSPPSV), 55 to 76 (FFGGRGRSQRKGSSKTGVTKSQ), 104 to 133 (CSEPQKSQEDHGKSQSLPRQRRGLRGLFSS), 161 to 193 (TVPGALPSVSDRGDYHGDSQGEELVPDVPNQTT), 222 to 245 (EMDKRRRAEEEGIGEDEKTGRQEG), and 366 to 454 (EVCY…PRDS). A compositionally biased stretch (basic and acidic residues) spans 222 to 242 (EMDKRRRAEEEGIGEDEKTGR). Composition is skewed to polar residues over residues 377–399 (DSPSLTPDQQLSSIRATSSSSPM) and 413–424 (SPQSDRQESVPN). Residues 439–452 (EESRERPHQERLPR) show a composition bias toward basic and acidic residues.

This sequence belongs to the Amer family.

It is found in the cytoplasm. The protein localises to the cell membrane. It localises to the nucleus. In terms of biological role, regulator of the canonical Wnt signaling pathway. Acts by specifically binding phosphatidylinositol 4,5-bisphosphate (PtdIns(4,5)P2), translocating to the cell membrane and interacting with key regulators of the canonical Wnt signaling pathway, such as components of the beta-catenin destruction complex. Acts both as a positive and negative regulator of the Wnt signaling pathway, depending on the context. The polypeptide is APC membrane recruitment protein 1 (amer1) (Danio rerio (Zebrafish)).